The chain runs to 332 residues: Biotin synthase (332 aa).

One can recognise a Radical SAM core domain in the interval 53–282 (HFGKKVKLNM…TKEIRISGGR (230 aa)). [4Fe-4S] cluster is bound by residues C71, C75, and C78. Positions 115, 147, 207, and 277 each coordinate [2Fe-2S] cluster.

It belongs to the radical SAM superfamily. Biotin synthase family. In terms of assembly, homodimer. The cofactor is [4Fe-4S] cluster. It depends on [2Fe-2S] cluster as a cofactor.

It catalyses the reaction (4R,5S)-dethiobiotin + (sulfur carrier)-SH + 2 reduced [2Fe-2S]-[ferredoxin] + 2 S-adenosyl-L-methionine = (sulfur carrier)-H + biotin + 2 5'-deoxyadenosine + 2 L-methionine + 2 oxidized [2Fe-2S]-[ferredoxin]. Its pathway is cofactor biosynthesis; biotin biosynthesis; biotin from 7,8-diaminononanoate: step 2/2. Catalyzes the conversion of dethiobiotin (DTB) to biotin by the insertion of a sulfur atom into dethiobiotin via a radical-based mechanism. This Bacillus cereus (strain ATCC 10987 / NRS 248) protein is Biotin synthase.